A 535-amino-acid polypeptide reads, in one-letter code: Probable galacturonosyltransferase 12 (535 aa).

Residues 1 to 37 (MQLHISPSLRHVTVVTGKGLREFIKVKVGSRRFSYQM) lie on the Cytoplasmic side of the membrane. The helical; Signal-anchor for type II membrane protein transmembrane segment at 38-58 (VFYSLLFFTFLLRFVFVLSTV) threads the bilayer. Residues 59 to 535 (DTIDGDPSPC…FIKSCHIRAS (477 aa)) are Lumenal-facing. Residues asparagine 397 and asparagine 430 are each glycosylated (N-linked (GlcNAc...) asparagine).

It belongs to the glycosyltransferase 8 family. As to expression, highly expressed in stems. Detected in roots, inflorescences, siliques, and leaves. Expressed in cells undergoing secondary wall thickening, including interfascicular fibers and primary and secondary xylem.

The protein localises to the golgi apparatus membrane. It functions in the pathway glycan metabolism; pectin biosynthesis. Involved in pectin assembly and/or distribution, and in the synthesis of secondary wall glucuronoxylan. Probably involved in the synthesis of the glycosyl sequence at the glucuronoxylan reducing end. May be involved in synthesis of a complex glycan primer for xylan synthesis. The sequence is that of Probable galacturonosyltransferase 12 (GAUT12) from Arabidopsis thaliana (Mouse-ear cress).